The following is a 455-amino-acid chain: Ribosomal protein uS12 methylthiotransferase RimO (455 aa).

The region spanning 10–120 (PKVGMVSLGC…VVEAVHDAAP (111 aa)) is the MTTase N-terminal domain. Residues cysteine 19, cysteine 55, cysteine 84, cysteine 151, cysteine 155, and cysteine 158 each coordinate [4Fe-4S] cluster. Residues 137–380 (LTPRHYSYLK…MAKTAAISAA (244 aa)) enclose the Radical SAM core domain. The 73-residue stretch at 383–455 (EAKIGRTLPV…DEHDLFGVVT (73 aa)) folds into the TRAM domain.

It belongs to the methylthiotransferase family. RimO subfamily. [4Fe-4S] cluster is required as a cofactor.

It localises to the cytoplasm. It catalyses the reaction L-aspartate(89)-[ribosomal protein uS12]-hydrogen + (sulfur carrier)-SH + AH2 + 2 S-adenosyl-L-methionine = 3-methylsulfanyl-L-aspartate(89)-[ribosomal protein uS12]-hydrogen + (sulfur carrier)-H + 5'-deoxyadenosine + L-methionine + A + S-adenosyl-L-homocysteine + 2 H(+). In terms of biological role, catalyzes the methylthiolation of an aspartic acid residue of ribosomal protein uS12. This is Ribosomal protein uS12 methylthiotransferase RimO from Sphingopyxis alaskensis (strain DSM 13593 / LMG 18877 / RB2256) (Sphingomonas alaskensis).